We begin with the raw amino-acid sequence, 552 residues long: Ferry endosomal RAB5 effector complex subunit 3 (552 aa).

The segment at 383–403 is disordered; the sequence is LKESLDSGNQNGGNDDKTKNA.

In terms of assembly, component of the FERRY complex composed of five subunits, TBCK, PPP1R21, FERRY3, CRYZL1 and GATD1 with a ratio of 1:2:1:2:4, respectively.

It localises to the cytoplasm. The protein localises to the early endosome. Its function is as follows. Component of the FERRY complex (Five-subunit Endosomal Rab5 and RNA/ribosome intermediary). The FERRY complex directly interacts with mRNAs and RAB5A, and functions as a RAB5A effector involved in the localization and the distribution of specific mRNAs most likely by mediating their endosomal transport. The complex recruits mRNAs and ribosomes to early endosomes through direct mRNA-interaction. Plays a role in mast cell degranulation. The protein is Ferry endosomal RAB5 effector complex subunit 3 of Homo sapiens (Human).